The chain runs to 121 residues: Large ribosomal subunit protein bL12 (121 aa).

It belongs to the bacterial ribosomal protein bL12 family. In terms of assembly, homodimer. Part of the ribosomal stalk of the 50S ribosomal subunit. Forms a multimeric L10(L12)X complex, where L10 forms an elongated spine to which 2 to 4 L12 dimers bind in a sequential fashion. Binds GTP-bound translation factors.

In terms of biological role, forms part of the ribosomal stalk which helps the ribosome interact with GTP-bound translation factors. Is thus essential for accurate translation. The protein is Large ribosomal subunit protein bL12 of Pectobacterium atrosepticum (strain SCRI 1043 / ATCC BAA-672) (Erwinia carotovora subsp. atroseptica).